Here is a 185-residue protein sequence, read N- to C-terminus: Probable gluconokinase (185 aa).

11–18 provides a ligand contact to ATP; sequence GVSGSGKS.

The protein belongs to the gluconokinase GntK/GntV family.

It catalyses the reaction D-gluconate + ATP = 6-phospho-D-gluconate + ADP + H(+). It participates in carbohydrate acid metabolism; D-gluconate degradation. The chain is Probable gluconokinase (Idnk) from Rattus norvegicus (Rat).